A 236-amino-acid polypeptide reads, in one-letter code: 7-cyano-7-deazaguanine synthase (236 aa).

ATP is bound at residue 7 to 17 (CSGGLDSVTLA). The Zn(2+) site is built by C185, C193, C196, and C199.

Belongs to the QueC family. It depends on Zn(2+) as a cofactor.

The catalysed reaction is 7-carboxy-7-deazaguanine + NH4(+) + ATP = 7-cyano-7-deazaguanine + ADP + phosphate + H2O + H(+). The protein operates within purine metabolism; 7-cyano-7-deazaguanine biosynthesis. Functionally, catalyzes the ATP-dependent conversion of 7-carboxy-7-deazaguanine (CDG) to 7-cyano-7-deazaguanine (preQ(0)). The sequence is that of 7-cyano-7-deazaguanine synthase from Rhizobium johnstonii (strain DSM 114642 / LMG 32736 / 3841) (Rhizobium leguminosarum bv. viciae).